Consider the following 854-residue polypeptide: DNA mismatch repair protein MutS (854 aa).

614 to 621 serves as a coordination point for ATP; the sequence is GPNMGGKS.

This sequence belongs to the DNA mismatch repair MutS family.

Its function is as follows. This protein is involved in the repair of mismatches in DNA. It is possible that it carries out the mismatch recognition step. This protein has a weak ATPase activity. This chain is DNA mismatch repair protein MutS, found in Sodalis glossinidius (strain morsitans).